A 218-amino-acid polypeptide reads, in one-letter code: tRNA (cytidine(56)-2'-O)-methyltransferase (218 aa).

S-adenosyl-L-methionine is bound by residues Leu-81, 106-110, and 124-131; these read GAEKV and IGNQPHSE. The tract at residues 170–218 is disordered; it reads KVGEEGPSGGAPGVRAERGRGGRGEGVQGADEVRGHKRGATDRDLGDET. Residues 200-218 show a composition bias toward basic and acidic residues; it reads DEVRGHKRGATDRDLGDET.

The protein belongs to the aTrm56 family. As to quaternary structure, homodimer.

The protein localises to the cytoplasm. It catalyses the reaction cytidine(56) in tRNA + S-adenosyl-L-methionine = 2'-O-methylcytidine(56) in tRNA + S-adenosyl-L-homocysteine + H(+). Its function is as follows. Specifically catalyzes the AdoMet-dependent 2'-O-ribose methylation of cytidine at position 56 in tRNAs. This chain is tRNA (cytidine(56)-2'-O)-methyltransferase, found in Ignicoccus hospitalis (strain KIN4/I / DSM 18386 / JCM 14125).